The chain runs to 251 residues: Ditrans,polycis-undecaprenyl-diphosphate synthase ((2E,6E)-farnesyl-diphosphate specific) (251 aa).

The active site involves Asp20. Asp20 is a Mg(2+) binding site. Residues 21–24 (GNGR), Trp25, Arg33, His37, and 65–67 (SSE) contribute to the substrate site. Asn68 (proton acceptor) is an active-site residue. Substrate contacts are provided by residues Trp69, Arg71, Arg188, and 194–196 (RIS). A Mg(2+)-binding site is contributed by Glu207.

Belongs to the UPP synthase family. As to quaternary structure, homodimer. Mg(2+) serves as cofactor.

It carries out the reaction 8 isopentenyl diphosphate + (2E,6E)-farnesyl diphosphate = di-trans,octa-cis-undecaprenyl diphosphate + 8 diphosphate. In terms of biological role, catalyzes the sequential condensation of isopentenyl diphosphate (IPP) with (2E,6E)-farnesyl diphosphate (E,E-FPP) to yield (2Z,6Z,10Z,14Z,18Z,22Z,26Z,30Z,34E,38E)-undecaprenyl diphosphate (di-trans,octa-cis-UPP). UPP is the precursor of glycosyl carrier lipid in the biosynthesis of bacterial cell wall polysaccharide components such as peptidoglycan and lipopolysaccharide. The chain is Ditrans,polycis-undecaprenyl-diphosphate synthase ((2E,6E)-farnesyl-diphosphate specific) from Vibrio parahaemolyticus serotype O3:K6 (strain RIMD 2210633).